The following is a 345-amino-acid chain: rRNA 2'-O-methyltransferase fibrillarin (345 aa).

Residues 1 to 114 (MGKPGFSPRG…GFKGGKTVTI (114 aa)) are disordered. Positions 8-108 (PRGGGGGGGG…RGGGAGGFKG (101 aa)) are enriched in gly residues. Asymmetric dimethylarginine occurs at positions 9, 23, 25, 41, 43, 49, 52, 59, 64, 72, 78, 84, 89, 94, and 99. Residues 198 to 199 (TT), 217 to 218 (EF), 242 to 243 (DA), and 262 to 265 (DVAQ) contribute to the S-adenosyl-L-methionine site.

The protein belongs to the methyltransferase superfamily. Fibrillarin family. Component of box C/D small nucleolar ribonucleoprotein (snoRNP) particles. It is associated with the U3, U8 and U13 small nuclear RNAs. By homology to other fibrillarins, some or all of the N-terminal domain arginines are modified to asymmetric dimethylarginine (DMA).

The protein resides in the nucleus. It localises to the nucleolus. It catalyses the reaction L-glutaminyl-[histone H2A] + S-adenosyl-L-methionine = N(5)-methyl-L-glutaminyl-[histone H2A] + S-adenosyl-L-homocysteine + H(+). Functionally, S-adenosyl-L-methionine-dependent methyltransferase that has the ability to methylate both RNAs and proteins. Involved in pre-rRNA processing. Utilizes the methyl donor S-adenosyl-L-methionine to catalyze the site-specific 2'-hydroxyl methylation of ribose moieties in pre-ribosomal RNA. Site specificity is provided by a guide RNA that base pairs with the substrate. Methylation occurs at a characteristic distance from the sequence involved in base pairing with the guide RNA. Also acts as a protein methyltransferase by mediating methylation of 'Gln-105' of histone H2A (H2AQ105me), a modification that impairs binding of the FACT complex and is specifically present at 35S ribosomal DNA locus. This Drosophila erecta (Fruit fly) protein is rRNA 2'-O-methyltransferase fibrillarin.